Consider the following 179-residue polypeptide: MLSLDFLDDVRRMNKRQLYYQVLNFGMIVSSALMIWKGLMLITGSESPIVVVLSGSMEPAFHRGDLLFLTNRVEDPIRVGEIVVFRIEGREIPIVHRVLKIHEKQDGHIKFLTKGDNNAVDDRGLYKQGQHWLEKKDVVGRARGFVPYIGIVTILMNDYPKFSYAVLFLLGLFVLVHRE.

The Cytoplasmic segment spans residues 1–16 (MLSLDFLDDVRRMNKR). A helical; Signal-anchor for type II membrane protein membrane pass occupies residues 17–36 (QLYYQVLNFGMIVSSALMIW). Topologically, residues 37–179 (KGLMLITGSE…LGLFVLVHRE (143 aa)) are lumenal. Residues Ser56, His96, and Asp122 each act as charge relay system in the active site. Residues 165–176 (AVLFLLGLFVLV) are C-terminal short (CTS) helix.

Belongs to the peptidase S26B family. Component of the signal peptidase complex paralog A (SPC-A) composed of a catalytic subunit SEC11A and three accessory subunits SPCS1, SPCS2 and SPCS3. Within the complex, interacts with SPCS2 and SPCS3. The complex induces a local thinning of the ER membrane which is used to measure the length of the signal peptide (SP) h-region of protein substrates. This ensures the selectivity of the complex towards h-regions shorter than 18-20 amino acids.

Its subcellular location is the endoplasmic reticulum membrane. The enzyme catalyses Cleavage of hydrophobic, N-terminal signal or leader sequences from secreted and periplasmic proteins.. Its function is as follows. Catalytic component of the signal peptidase complex (SPC) which catalyzes the cleavage of N-terminal signal sequences from nascent proteins as they are translocated into the lumen of the endoplasmic reticulum. Specifically cleaves N-terminal signal peptides that contain a hydrophobic alpha-helix (h-region) shorter than 18-20 amino acids. The protein is Signal peptidase complex catalytic subunit SEC11A (Sec11a) of Rattus norvegicus (Rat).